A 399-amino-acid polypeptide reads, in one-letter code: CCA-adding enzyme (399 aa).

Residues G33 and R36 each contribute to the ATP site. 2 residues coordinate CTP: G33 and R36. Mg(2+) contacts are provided by D46 and D48. The ATP site is built by R117, D160, R163, R166, and R169. 5 residues coordinate CTP: R117, D160, R163, R166, and R169.

The protein belongs to the tRNA nucleotidyltransferase/poly(A) polymerase family. Bacterial CCA-adding enzyme type 3 subfamily. Homodimer. It depends on Mg(2+) as a cofactor.

The catalysed reaction is a tRNA precursor + 2 CTP + ATP = a tRNA with a 3' CCA end + 3 diphosphate. It catalyses the reaction a tRNA with a 3' CCA end + 2 CTP + ATP = a tRNA with a 3' CCACCA end + 3 diphosphate. Functionally, catalyzes the addition and repair of the essential 3'-terminal CCA sequence in tRNAs without using a nucleic acid template. Adds these three nucleotides in the order of C, C, and A to the tRNA nucleotide-73, using CTP and ATP as substrates and producing inorganic pyrophosphate. tRNA 3'-terminal CCA addition is required both for tRNA processing and repair. Also involved in tRNA surveillance by mediating tandem CCA addition to generate a CCACCA at the 3' terminus of unstable tRNAs. While stable tRNAs receive only 3'-terminal CCA, unstable tRNAs are marked with CCACCA and rapidly degraded. This chain is CCA-adding enzyme, found in Lactobacillus helveticus (strain DPC 4571).